The chain runs to 438 residues: Enolase (438 aa).

Q174 contributes to the (2R)-2-phosphoglycerate binding site. The active-site Proton donor is E216. 3 residues coordinate Mg(2+): D253, E297, and D324. Positions 349, 378, 379, and 400 each coordinate (2R)-2-phosphoglycerate. The active-site Proton acceptor is K349.

This sequence belongs to the enolase family. As to quaternary structure, component of the RNA degradosome, a multiprotein complex involved in RNA processing and mRNA degradation. Mg(2+) serves as cofactor.

It localises to the cytoplasm. It is found in the secreted. The protein localises to the cell surface. It catalyses the reaction (2R)-2-phosphoglycerate = phosphoenolpyruvate + H2O. It functions in the pathway carbohydrate degradation; glycolysis; pyruvate from D-glyceraldehyde 3-phosphate: step 4/5. Its function is as follows. Catalyzes the reversible conversion of 2-phosphoglycerate (2-PG) into phosphoenolpyruvate (PEP). It is essential for the degradation of carbohydrates via glycolysis. The sequence is that of Enolase from Psychrobacter cryohalolentis (strain ATCC BAA-1226 / DSM 17306 / VKM B-2378 / K5).